We begin with the raw amino-acid sequence, 208 residues long: Flavin-dependent thymidylate synthase (208 aa).

Residues 1 to 208 (MEVICKHYTP…QYLFEDCLKH (208 aa)) enclose the ThyX domain. Residues Ser50 and 74–76 (RHR) each bind FAD. DUMP-binding positions include 71–74 (ELSR), 84–86 (SSR), and Lys147. Residues 74–84 (RHRIASLSVKS) carry the ThyX motif motif. FAD-binding positions include 163-165 (NAR) and Asn169. Arg174 is a dUMP binding site. Arg174 functions as the Involved in ionization of N3 of dUMP, leading to its activation in the catalytic mechanism.

This sequence belongs to the thymidylate synthase ThyX family. Homotetramer. It depends on FAD as a cofactor.

It catalyses the reaction dUMP + (6R)-5,10-methylene-5,6,7,8-tetrahydrofolate + NADPH + H(+) = dTMP + (6S)-5,6,7,8-tetrahydrofolate + NADP(+). It participates in pyrimidine metabolism; dTTP biosynthesis. Functionally, catalyzes the reductive methylation of 2'-deoxyuridine-5'-monophosphate (dUMP) to 2'-deoxythymidine-5'-monophosphate (dTMP) while utilizing 5,10-methylenetetrahydrofolate (mTHF) as the methyl donor, and NAD(P)H and FADH(2) as the reductant. The sequence is that of Flavin-dependent thymidylate synthase from Helicobacter pylori (strain ATCC 700392 / 26695) (Campylobacter pylori).